A 95-amino-acid chain; its full sequence is Aspartyl/glutamyl-tRNA(Asn/Gln) amidotransferase subunit C (95 aa).

It belongs to the GatC family. Heterotrimer of A, B and C subunits.

It carries out the reaction L-glutamyl-tRNA(Gln) + L-glutamine + ATP + H2O = L-glutaminyl-tRNA(Gln) + L-glutamate + ADP + phosphate + H(+). It catalyses the reaction L-aspartyl-tRNA(Asn) + L-glutamine + ATP + H2O = L-asparaginyl-tRNA(Asn) + L-glutamate + ADP + phosphate + 2 H(+). In terms of biological role, allows the formation of correctly charged Asn-tRNA(Asn) or Gln-tRNA(Gln) through the transamidation of misacylated Asp-tRNA(Asn) or Glu-tRNA(Gln) in organisms which lack either or both of asparaginyl-tRNA or glutaminyl-tRNA synthetases. The reaction takes place in the presence of glutamine and ATP through an activated phospho-Asp-tRNA(Asn) or phospho-Glu-tRNA(Gln). This is Aspartyl/glutamyl-tRNA(Asn/Gln) amidotransferase subunit C from Marinobacter nauticus (strain ATCC 700491 / DSM 11845 / VT8) (Marinobacter aquaeolei).